The following is a 792-amino-acid chain: MSVAKSIAAVLVALLPGALAQANTSYVDYNVEANPDLTPQSVATIDLSFPDCENGPLSKTLVCDTSARPHDRAAALVSMFTFEELVNNTGNTSPGVPRLGLPPYQVWSEALHGLDRANFTDEGEYSWATSFPMPILTMSALNRTLINQIATIIATQGRAFNNVGRYGLDVYAPNINAFRSAMWGRGQETPGEDAYCLASAYAYEYITGIQGGVDPEHLKLVATAKHYAGYDLENWDGHSRLGNDMNITQQELSEYYTPQFLVAARDAKVHSVMCSYNAVNGVPSCANSFFLQTLLRDTFGFVEDGYVSSDCDSAYNVWNPHEFAANITGAAADSIRAGTDIDCGTTYQYYFGEAFDEQEVTRAEIERGVIRLYSNLVRLGYFDGNGSVYRDLTWNDVVTTDAWNISYEAAVEGIVLLKNDGTLPLAKSVRSVALIGPWMNVTTQLQGNYFGPAPYLISPLNAFQNSDFDVNYAFGTNISSHSTDGFSEALSAAKKSDVIIFAGGIDNTLEAEAMDRMNITWPGNQLQLIDQLSQLGKPLIVLQMGGGQVDSSSLKSNKNVNSLIWGGYPGQSGGQALLDIITGKRAPAGRLVVTQYPAEYATQFPATDMSLRPHGNNPGQTYMWYTGTPVYEFGHGLFYTTFHASLPGTGKDKTSFNIQDLLTQPHPGFANVEQMPLLNFTVTITNTGKVASDYTAMLFANTTAGPAPYPNKWLVGFDRLASLEPHRSQTMTIPVTIDSVARTDEAGNRVLYPGKYELALNNERSVVLQFVLTGREAVVFKWPVEQQQISSA.

Positions 1–20 (MSVAKSIAAVLVALLPGALA) are cleaved as a signal peptide. N-linked (GlcNAc...) asparagine glycosylation is found at N23, N87, N118, N142, and N246. Residue D310 is part of the active site. 8 N-linked (GlcNAc...) asparagine glycosylation sites follow: N326, N385, N404, N440, N477, N518, N679, and N701.

The protein belongs to the glycosyl hydrolase 3 family.

Its subcellular location is the secreted. It catalyses the reaction Hydrolysis of (1-&gt;4)-beta-D-xylans, to remove successive D-xylose residues from the non-reducing termini.. It participates in glycan degradation; xylan degradation. Functionally, xylan 1,4-beta-xylosidase involved in the hydrolysis of xylan, a major structural heterogeneous polysaccharide found in plant biomass representing the second most abundant polysaccharide in the biosphere, after cellulose. The chain is Probable exo-1,4-beta-xylosidase xlnD (xlnD) from Aspergillus fumigatus (strain ATCC MYA-4609 / CBS 101355 / FGSC A1100 / Af293) (Neosartorya fumigata).